We begin with the raw amino-acid sequence, 436 residues long: 3-ketoacyl-CoA thiolase (436 aa).

The active-site Acyl-thioester intermediate is the Cys-99. Active-site proton acceptor residues include His-392 and Cys-422.

The protein belongs to the thiolase-like superfamily. Thiolase family. As to quaternary structure, heterotetramer of two alpha chains (FadJ) and two beta chains (FadI).

Its subcellular location is the cytoplasm. The catalysed reaction is an acyl-CoA + acetyl-CoA = a 3-oxoacyl-CoA + CoA. Its pathway is lipid metabolism; fatty acid beta-oxidation. Functionally, catalyzes the final step of fatty acid oxidation in which acetyl-CoA is released and the CoA ester of a fatty acid two carbons shorter is formed. In Escherichia coli O9:H4 (strain HS), this protein is 3-ketoacyl-CoA thiolase.